A 202-amino-acid chain; its full sequence is Putative NAD(P)H nitroreductase YodC (202 aa).

FMN-binding positions include 11-13 (RAS), 68-70 (QKQ), 155-156 (GG), and Arg192.

It belongs to the nitroreductase family. FMN serves as cofactor.

It localises to the cytoplasm. Putative nitroreductase that may contribute to the degradation of aromatic compounds. The protein is Putative NAD(P)H nitroreductase YodC (yodC) of Bacillus subtilis (strain 168).